We begin with the raw amino-acid sequence, 494 residues long: MLASGLLLAALLACLTVMILLSVWRQRKLWGKLPPGPTPLPFIGNYLQLNTEQMYDSLMKISERYGPVFTIHLGPRRIVVLCGQEAVKEALVDQAEDFSGRGELATFDWLFKGYGVVFSSWERARPLRRFAISTLRDFGVGKRGIEERIQEEAGFLIEAFRDTRGAFIDPTFFLSRTVSNVISSIVFGDRFDYEDKEFLSLLRMMLGSFQFTATPTGQLYEMFYSVMKHLPGPQQQAFKELEGLRDFIAKKVERNQRTLDPNSPRDFIDSFLIRMQEEKKDPKSEFHMKNLVMTTLNLFFAGTETVSTTMRYGFLLLMKHPDVEAKVHEEIDRVIGRNRQPKFEDRAKMPYTEAVIHEIQRFTDMIPMGLAHRVTRDTKFRDFLLPKGAEVFPMLGSVLKDPKFFSKPREFYPQHFLDEKGQFKKSDAFMPFSVGKRYCLGEGLARMELFLFFTTIMQNFRFRSQQAPQDIDVSPKHVGFATIPRTYTMSFVPR.

N6-acetyllysine is present on lysine 379. Cysteine 439 serves as a coordination point for heme.

Belongs to the cytochrome P450 family. Heme serves as cofactor. Expressed in liver and lung as well as in nasal tissues.

The protein localises to the endoplasmic reticulum membrane. The protein resides in the microsome membrane. The catalysed reaction is an organic molecule + reduced [NADPH--hemoprotein reductase] + O2 = an alcohol + oxidized [NADPH--hemoprotein reductase] + H2O + H(+). In terms of biological role, catalyzes the oxygenation of a variety of substrates, including ethanol and procarcinogens such as N-nitrosodiethylamine and phenacetin. Exhibits a high coumarin 7-hydroxylase activity. Converts also testosterone to androstenedione. This is Cytochrome P450 2A10 (CYP2A10) from Oryctolagus cuniculus (Rabbit).